A 283-amino-acid polypeptide reads, in one-letter code: 4-diphosphocytidyl-2-C-methyl-D-erythritol kinase (283 aa).

Lys13 is a catalytic residue. An ATP-binding site is contributed by 96–106; sequence PMGGGIGGGSS. The active site involves Asp138.

It belongs to the GHMP kinase family. IspE subfamily.

It carries out the reaction 4-CDP-2-C-methyl-D-erythritol + ATP = 4-CDP-2-C-methyl-D-erythritol 2-phosphate + ADP + H(+). It participates in isoprenoid biosynthesis; isopentenyl diphosphate biosynthesis via DXP pathway; isopentenyl diphosphate from 1-deoxy-D-xylulose 5-phosphate: step 3/6. In terms of biological role, catalyzes the phosphorylation of the position 2 hydroxy group of 4-diphosphocytidyl-2C-methyl-D-erythritol. The chain is 4-diphosphocytidyl-2-C-methyl-D-erythritol kinase from Pseudomonas fluorescens (strain SBW25).